The sequence spans 277 residues: 3-methyl-2-oxobutanoate hydroxymethyltransferase (277 aa).

Positions 53 and 96 each coordinate Mg(2+). Residues 53 to 54 (DS), aspartate 96, and lysine 126 each bind 3-methyl-2-oxobutanoate. Glutamate 128 provides a ligand contact to Mg(2+). Glutamate 195 acts as the Proton acceptor in catalysis.

The protein belongs to the PanB family. As to quaternary structure, homodecamer; pentamer of dimers. Mg(2+) serves as cofactor.

The protein resides in the cytoplasm. The enzyme catalyses 3-methyl-2-oxobutanoate + (6R)-5,10-methylene-5,6,7,8-tetrahydrofolate + H2O = 2-dehydropantoate + (6S)-5,6,7,8-tetrahydrofolate. It participates in cofactor biosynthesis; (R)-pantothenate biosynthesis; (R)-pantoate from 3-methyl-2-oxobutanoate: step 1/2. Its function is as follows. Catalyzes the reversible reaction in which hydroxymethyl group from 5,10-methylenetetrahydrofolate is transferred onto alpha-ketoisovalerate to form ketopantoate. In Chlorobaculum tepidum (strain ATCC 49652 / DSM 12025 / NBRC 103806 / TLS) (Chlorobium tepidum), this protein is 3-methyl-2-oxobutanoate hydroxymethyltransferase.